A 143-amino-acid chain; its full sequence is Calcitonin (143 aa).

The signal sequence occupies residues 1 to 25 (MGFGKSSPFLAFSILVLCQAGSLQA). A propeptide spanning residues 26–84 (TPLRSALETLPDPGALSEKEGRLLLAALVKAYVQRKTNELEQEEEQEETEDSSLDSSRA) is cleaved from the precursor. Serine 42 bears the Phosphoserine mark. A disordered region spans residues 62 to 86 (TNELEQEEEQEETEDSSLDSSRAKR). Residues 65–78 (LEQEEEQEETEDSS) show a composition bias toward acidic residues. Cysteine 87 and cysteine 93 are joined by a disulfide. Positions 112–143 (GFGPETPGKKRDIANSLEKDLSSHFGVPTDAN) are disordered. The residue at position 118 (proline 118) is a Proline amide. A compositionally biased stretch (basic and acidic residues) spans 118-133 (PGKKRDIANSLEKDLS). Positions 122–143 (RDIANSLEKDLSSHFGVPTDAN) are excised as a propeptide.

Belongs to the calcitonin family.

Its subcellular location is the secreted. Functionally, calcitonin is a peptide hormone that causes a rapid but short-lived drop in the level of calcium and phosphate in blood by promoting the incorporation of those ions in the bones. Calcitonin function is mediated by the calcitonin receptor/CALCR and the CALCR-RAMP2 (AMYR2) receptor complex. This is Calcitonin (CALCA) from Ovis aries (Sheep).